Consider the following 212-residue polypeptide: Ribonuclease HII (212 aa).

Residues 24–212 (QLVAGVDEVG…PVKKALGIEE (189 aa)) form the RNase H type-2 domain. A divalent metal cation-binding residues include Asp-30, Glu-31, and Asp-122.

Belongs to the RNase HII family. It depends on Mn(2+) as a cofactor. The cofactor is Mg(2+).

It localises to the cytoplasm. It catalyses the reaction Endonucleolytic cleavage to 5'-phosphomonoester.. Its function is as follows. Endonuclease that specifically degrades the RNA of RNA-DNA hybrids. The protein is Ribonuclease HII of Vibrio campbellii (strain ATCC BAA-1116).